Here is a 289-residue protein sequence, read N- to C-terminus: 4-hydroxy-3-methylbut-2-enyl diphosphate reductase (289 aa).

Cys12 serves as a coordination point for [4Fe-4S] cluster. 2 residues coordinate (2E)-4-hydroxy-3-methylbut-2-enyl diphosphate: His41 and His84. Residues His41 and His84 each contribute to the dimethylallyl diphosphate site. The isopentenyl diphosphate site is built by His41 and His84. Cys106 provides a ligand contact to [4Fe-4S] cluster. A (2E)-4-hydroxy-3-methylbut-2-enyl diphosphate-binding site is contributed by His134. His134 provides a ligand contact to dimethylallyl diphosphate. His134 contacts isopentenyl diphosphate. Glu136 acts as the Proton donor in catalysis. Ser172 is a (2E)-4-hydroxy-3-methylbut-2-enyl diphosphate binding site. Cys200 is a [4Fe-4S] cluster binding site. Residues Ser229, Asn231, and Ser273 each coordinate (2E)-4-hydroxy-3-methylbut-2-enyl diphosphate. The dimethylallyl diphosphate site is built by Ser229, Asn231, and Ser273. The isopentenyl diphosphate site is built by Ser229, Asn231, and Ser273.

The protein belongs to the IspH family. [4Fe-4S] cluster serves as cofactor.

The catalysed reaction is isopentenyl diphosphate + 2 oxidized [2Fe-2S]-[ferredoxin] + H2O = (2E)-4-hydroxy-3-methylbut-2-enyl diphosphate + 2 reduced [2Fe-2S]-[ferredoxin] + 2 H(+). It carries out the reaction dimethylallyl diphosphate + 2 oxidized [2Fe-2S]-[ferredoxin] + H2O = (2E)-4-hydroxy-3-methylbut-2-enyl diphosphate + 2 reduced [2Fe-2S]-[ferredoxin] + 2 H(+). It participates in isoprenoid biosynthesis; dimethylallyl diphosphate biosynthesis; dimethylallyl diphosphate from (2E)-4-hydroxy-3-methylbutenyl diphosphate: step 1/1. It functions in the pathway isoprenoid biosynthesis; isopentenyl diphosphate biosynthesis via DXP pathway; isopentenyl diphosphate from 1-deoxy-D-xylulose 5-phosphate: step 6/6. Its function is as follows. Catalyzes the conversion of 1-hydroxy-2-methyl-2-(E)-butenyl 4-diphosphate (HMBPP) into a mixture of isopentenyl diphosphate (IPP) and dimethylallyl diphosphate (DMAPP). Acts in the terminal step of the DOXP/MEP pathway for isoprenoid precursor biosynthesis. The chain is 4-hydroxy-3-methylbut-2-enyl diphosphate reductase from Opitutus terrae (strain DSM 11246 / JCM 15787 / PB90-1).